A 68-amino-acid polypeptide reads, in one-letter code: Small ribosomal subunit protein bS18c (68 aa).

It belongs to the bacterial ribosomal protein bS18 family. In terms of assembly, part of the 30S ribosomal subunit.

The protein resides in the plastid. The protein localises to the chloroplast. In Cyanidium caldarium (Red alga), this protein is Small ribosomal subunit protein bS18c (rps18).